The primary structure comprises 302 residues: DDRGK domain-containing protein 1 (302 aa).

A helical membrane pass occupies residues 1–21; the sequence is MDPLLLGSVGVLVLAVTLIIW. At 22 to 302 the chain is on the cytoplasmic side; sequence RLLKLQWDEK…IRLETPSAAE (281 aa). A disordered region spans residues 101–178; it reads EYDEDGKKIG…EREEKERKEH (78 aa). The span at 118 to 178 shows a compositional bias: basic and acidic residues; the sequence is QAKEEKRQMR…EREEKERKEH (61 aa).

It belongs to the DDRGK1 family.

The protein resides in the endoplasmic reticulum membrane. Functionally, substrate adapter for ufmylation, the covalent attachment of the ubiquitin-like modifier ufm-1 to substrate proteins. This Caenorhabditis elegans protein is DDRGK domain-containing protein 1.